The following is a 351-amino-acid chain: Photosystem II D2 protein (351 aa).

A helical membrane pass occupies residues 39–59 (TAYLAAGGWFTGTTFVTSWYT). Histidine 116 contributes to the chlorophyll a binding site. The chain crosses the membrane as a helical span at residues 123–139 (GFCLRQFEIARLVGIRP). Residues glutamine 128 and asparagine 141 each contribute to the pheophytin a site. The chain crosses the membrane as a helical span at residues 151–164 (VFVSVFLLYPLGQA). Histidine 196 is a chlorophyll a binding site. Residues 206–226 (GALLCAIHGATVENTLFEDGD) form a helical membrane-spanning segment. 2 residues coordinate a plastoquinone: histidine 213 and phenylalanine 260. Histidine 213 serves as a coordination point for Fe cation. Residue histidine 267 coordinates Fe cation. Residues 277–293 (GLWTSSIGIVGLALNLR) traverse the membrane as a helical segment.

This sequence belongs to the reaction center PufL/M/PsbA/D family. In terms of assembly, PSII is composed of 1 copy each of membrane proteins PsbA, PsbB, PsbC, PsbD, PsbE, PsbF, PsbH, PsbI, PsbJ, PsbK, PsbL, PsbM, PsbT, PsbX, PsbY, PsbZ, Psb30/Ycf12, at least 3 peripheral proteins of the oxygen-evolving complex and a large number of cofactors. It forms dimeric complexes. The D1/D2 heterodimer binds P680, chlorophylls that are the primary electron donor of PSII, and subsequent electron acceptors. It shares a non-heme iron and each subunit binds pheophytin, quinone, additional chlorophylls, carotenoids and lipids. There is also a Cl(-1) ion associated with D1 and D2, which is required for oxygen evolution. The PSII complex binds additional chlorophylls, carotenoids and specific lipids. is required as a cofactor.

It localises to the plastid. It is found in the chloroplast thylakoid membrane. The enzyme catalyses 2 a plastoquinone + 4 hnu + 2 H2O = 2 a plastoquinol + O2. Photosystem II (PSII) is a light-driven water:plastoquinone oxidoreductase that uses light energy to abstract electrons from H(2)O, generating O(2) and a proton gradient subsequently used for ATP formation. It consists of a core antenna complex that captures photons, and an electron transfer chain that converts photonic excitation into a charge separation. The D1/D2 (PsbA/PsbD) reaction center heterodimer binds P680, the primary electron donor of PSII as well as several subsequent electron acceptors. D2 is needed for assembly of a stable PSII complex. The protein is Photosystem II D2 protein of Thalassiosira pseudonana (Marine diatom).